Consider the following 293-residue polypeptide: MTGKTQTSNVTNKNDPKSINSRVFIGNLNTAIVKKVDIEAIFSKYGKIVGCSVHKGYAFVQYMSERHARAAVAGENARIIAGQPLDINMAGEPKPYRPKPGNKRPISALYRLESKEPFLSVGGYVFDYDYYRDDFYNRLFDYHGRVPPPPRAVIPLKRPRAAVTTTRRGKGVFSMKGGSRSAVSGSSSSGSKLKSDELQTIKKELTQIKTKIDSLLGRLEKIEKQQKAEAEAQKKQLEASLELIQDECVSENADHSAEEPAEGAPDADGEELTDGVEEDFDEDGAHELFLQIK.

The 72-residue stretch at 21 to 92 (SRVFIGNLNT…QPLDINMAGE (72 aa)) folds into the RRM domain. Disordered stretches follow at residues 159–195 (PRAA…KLKS) and 245–293 (QDEC…LQIK). The segment covering 176–192 (KGGSRSAVSGSSSSGSK) has biased composition (low complexity). Residues 192 to 254 (KLKSDELQTI…QDECVSENAD (63 aa)) adopt a coiled-coil conformation. The segment covering 259–284 (EPAEGAPDADGEELTDGVEEDFDEDG) has biased composition (acidic residues).

The protein belongs to the RRM HNRPC family. RALY subfamily.

This is RNA-binding Raly-like protein (RALYL) from Bos taurus (Bovine).